The following is a 327-amino-acid chain: 4-hydroxy-2-oxoglutarate aldolase, mitochondrial (327 aa).

The transit peptide at 1 to 25 (MLVPRVWSSVRLGLSRVLSRTLRGW) directs the protein to the mitochondrion. 77–78 (SN) serves as a coordination point for substrate. The active-site Schiff-base intermediate with substrate is the lysine 196. 2 residues coordinate substrate: serine 198 and glycine 222.

This sequence belongs to the DapA family. In terms of assembly, homotetramer.

Its subcellular location is the mitochondrion. It carries out the reaction (4S)-4-hydroxy-2-oxoglutarate = glyoxylate + pyruvate. The catalysed reaction is (4R)-4-hydroxy-2-oxoglutarate = glyoxylate + pyruvate. With respect to regulation, inhibited by divalent cations. Its function is as follows. Catalyzes the final step in the metabolic pathway of hydroxyproline. This Bos taurus (Bovine) protein is 4-hydroxy-2-oxoglutarate aldolase, mitochondrial (HOGA1).